Reading from the N-terminus, the 555-residue chain is uncharacterized protein (555 aa).

The Extracellular segment spans residues 1-83 (MSNEDETTRL…GRRKLLCLYG (83 aa)). Residues 84-104 (LVMIICIAESISMTATIPLVM) form a helical membrane-spanning segment. Residues 105-125 (DKVAEGISDENGHYDSVAVQT) lie on the Cytoplasmic side of the membrane. The helical transmembrane segment at 126–146 (IVSSISSSTMMIAGAISIFMA) threads the bilayer. Topologically, residues 147 to 188 (GKWGELSDRIGRVRVFKYMSGIRVIGLLTHVFTLSSKMKYHK) are extracellular. A helical transmembrane segment spans residues 189-209 (WAIVLTACIVPSFGGLFALVA). At 210 to 229 (NGNSYVSDIVKTEHRMVTIG) the chain is on the cytoplasmic side. A helical membrane pass occupies residues 230 to 250 (IMMSCIYATMGVGPMFGSFLV). The Extracellular portion of the chain corresponds to 251–257 (KWTHGNG). The helical transmembrane segment at 258 to 278 (FIPIYTSIAFVILALIICETI) threads the bilayer. The Cytoplasmic portion of the chain corresponds to 279–356 (MVEPRHETQM…LVPRHTVILL (78 aa)). Residues 289–311 (AHSQSTYTKRREKLRSQSGSDDA) are disordered. The helical transmembrane segment at 357 to 377 (IVLDILFVCGTTSCMPALILF) threads the bilayer. At 378 to 386 (STYEYKWHA) the chain is on the extracellular side. A helical membrane pass occupies residues 387–407 (VELGYFISILGIGRGVVLLVV). The Cytoplasmic segment spans residues 408-428 (SPTLLYTLKRIYQHLNHSIDK). A helical membrane pass occupies residues 429–449 (IDIFCIQFSMIVITLSLFVMI). At 450-459 (RFGEKTPTSM) the chain is on the extracellular side. The helical transmembrane segment at 460-480 (IIFALLQALSAFCSPTLQSGI) threads the bilayer. The Cytoplasmic segment spans residues 481 to 491 (IKYTSKKHTGE). Residues 492 to 512 (MFGAMALVRSCVMLVIPPILL) form a helical membrane-spanning segment. The Extracellular segment spans residues 513-523 (KLYGSTVSVNP). A helical transmembrane segment spans residues 524 to 544 (SLFMYIPFSTSIVAILLTFFL). Residues 545–555 (RIYKNPPLDGP) lie on the Cytoplasmic side of the membrane.

The protein localises to the membrane. This is an uncharacterized protein from Saccharomyces cerevisiae (strain ATCC 204508 / S288c) (Baker's yeast).